Consider the following 360-residue polypeptide: Phospho-N-acetylmuramoyl-pentapeptide-transferase (360 aa).

The next 10 membrane-spanning stretches (helical) occupy residues 21–41 (YLTLRVILGTLTALMLCLWLG), 73–93 (TMGGAMILIAIAVSTLLWGDL), 94–114 (TNHYVWLVLAVTLGFGAIGWV), 145–165 (AVTLYLTAASPVEVSLIVPLF), 168–188 (VVVPLGLFYIVLTYFVIVGSS), 199–219 (GLAIMPTVLVAMGLAIFAYAS), 236–256 (AGELAVFCGTIAGAGLGFLWF), 263–283 (VFMGDVGALALGAALGVVAVI), 288–308 (IVLFIMGGVFVMETVSVMLQV), and 339–359 (IVRFWIITVVLVLLGLATLKI).

The protein belongs to the glycosyltransferase 4 family. MraY subfamily. Mg(2+) serves as cofactor.

The protein resides in the cell inner membrane. It catalyses the reaction UDP-N-acetyl-alpha-D-muramoyl-L-alanyl-gamma-D-glutamyl-meso-2,6-diaminopimeloyl-D-alanyl-D-alanine + di-trans,octa-cis-undecaprenyl phosphate = di-trans,octa-cis-undecaprenyl diphospho-N-acetyl-alpha-D-muramoyl-L-alanyl-D-glutamyl-meso-2,6-diaminopimeloyl-D-alanyl-D-alanine + UMP. It functions in the pathway cell wall biogenesis; peptidoglycan biosynthesis. Functionally, catalyzes the initial step of the lipid cycle reactions in the biosynthesis of the cell wall peptidoglycan: transfers peptidoglycan precursor phospho-MurNAc-pentapeptide from UDP-MurNAc-pentapeptide onto the lipid carrier undecaprenyl phosphate, yielding undecaprenyl-pyrophosphoryl-MurNAc-pentapeptide, known as lipid I. The protein is Phospho-N-acetylmuramoyl-pentapeptide-transferase of Chromohalobacter salexigens (strain ATCC BAA-138 / DSM 3043 / CIP 106854 / NCIMB 13768 / 1H11).